The sequence spans 306 residues: UDP-3-O-acyl-N-acetylglucosamine deacetylase (306 aa).

Residues His79, His239, and Asp243 each contribute to the Zn(2+) site. The active-site Proton donor is the His266.

Belongs to the LpxC family. The cofactor is Zn(2+).

It catalyses the reaction a UDP-3-O-[(3R)-3-hydroxyacyl]-N-acetyl-alpha-D-glucosamine + H2O = a UDP-3-O-[(3R)-3-hydroxyacyl]-alpha-D-glucosamine + acetate. The protein operates within glycolipid biosynthesis; lipid IV(A) biosynthesis; lipid IV(A) from (3R)-3-hydroxytetradecanoyl-[acyl-carrier-protein] and UDP-N-acetyl-alpha-D-glucosamine: step 2/6. In terms of biological role, catalyzes the hydrolysis of UDP-3-O-myristoyl-N-acetylglucosamine to form UDP-3-O-myristoylglucosamine and acetate, the committed step in lipid A biosynthesis. This is UDP-3-O-acyl-N-acetylglucosamine deacetylase from Haemophilus ducreyi (strain 35000HP / ATCC 700724).